Consider the following 1228-residue polypeptide: Apical endosomal glycoprotein (1228 aa).

Residues M1 to G21 form the signal peptide. The Extracellular portion of the chain corresponds to T23 to P1159. Residues H28–E49 enclose the LDL-receptor class A 1; truncated domain. An MAM 1 domain is found at F65–L223. N-linked (GlcNAc...) asparagine glycosylation is present at N204. The LDL-receptor class A 2 domain occupies R229 to S267. Cystine bridges form between C230/C242, C237/C255, and C249/C266. Residues M270–L426 form the MAM 2 domain. 2 N-linked (GlcNAc...) asparagine glycosylation sites follow: N290 and N340. Positions T457 to G492 constitute an LDL-receptor class A 3 domain. 3 disulfides stabilise this stretch: C458/C469, C465/C482, and C476/C491. 4 MAM domains span residues G492–P649, L659–A815, K817–Q975, and G977–Q1144. N641 is a glycosylation site (N-linked (GlcNAc...) asparagine). N-linked (GlcNAc...) asparagine glycosylation occurs at N841. A helical membrane pass occupies residues V1160–W1180. Residues H1181 to A1228 lie on the Cytoplasmic side of the membrane.

It localises to the membrane. Functionally, probably involved in the sorting and selective transport of receptors and ligands across polarized epithelia. The chain is Apical endosomal glycoprotein from Mus musculus (Mouse).